Consider the following 332-residue polypeptide: MSTQSGIVAEQALLHSLNENLSADGIVIIIAKISPDSTSVHQTQVARSFEELVQLASQEREPLYIFYKPEGLDKYFFVSFIPDGSPVRSRMLYASTKNTLARQVGSNSLSTEQPLITDAQDLVDLKNFDSARPAGQNKPLTHDEEMQIEINKQQALLRKNTSVKLVSQDSASPLSLTFRVNSEKPINEILDSEGKNLIIFQIDPSNETIQIVQSDTCPSVDELYIDLPGPSYTIFRQGDSSFFIYSCPSGSKVKDRMIYASNKNGFINYLKNDQKIAFSKVVEIGDFVELDKSLLMATNKEDSLDHGSNPDLPNKSNLKFNKPKGPLRKRRT.

The ADF-H 1 domain maps to 5–132 (SGIVAEQALL…VDLKNFDSAR (128 aa)). 2 positions are modified to phosphoserine: S167 and S172. One can recognise an ADF-H 2 domain in the interval 173 to 300 (PLSLTFRVNS…DKSLLMATNK (128 aa)). The tract at residues 301 to 332 (EDSLDHGSNPDLPNKSNLKFNKPKGPLRKRRT) is disordered. The span at 321–332 (NKPKGPLRKRRT) shows a compositional bias: basic residues.

The protein belongs to the actin-binding proteins ADF family. Twinfilin subfamily. As to quaternary structure, interacts with G-actin; ADP-actin form.

Its subcellular location is the cytoplasm. It is found in the cytoskeleton. Actin-binding protein involved in motile and morphological processes. Inhibits actin polymerization, likely by sequestering G-actin. Prevents actin filament assembly by forming a 1:1 complex with actin monomers, and inhibits the nucleotide exchange reaction of actin monomers. This chain is Twinfilin-1 (TWF1), found in Saccharomyces cerevisiae (strain ATCC 204508 / S288c) (Baker's yeast).